Here is a 304-residue protein sequence, read N- to C-terminus: Recombination-associated protein RdgC (304 aa).

The protein belongs to the RdgC family.

It localises to the cytoplasm. The protein resides in the nucleoid. May be involved in recombination. The polypeptide is Recombination-associated protein RdgC (Shewanella baltica (strain OS223)).